Consider the following 287-residue polypeptide: Probable 3-hydroxybutyryl-CoA dehydrogenase (287 aa).

The protein belongs to the 3-hydroxyacyl-CoA dehydrogenase family.

It carries out the reaction (3S)-3-hydroxybutanoyl-CoA + NADP(+) = acetoacetyl-CoA + NADPH + H(+). The protein operates within lipid metabolism; butanoate metabolism. This Bacillus subtilis (strain 168) protein is Probable 3-hydroxybutyryl-CoA dehydrogenase (mmgB).